The chain runs to 349 residues: Xylitol-binding protein (349 aa).

Residues 1 to 22 form the signal peptide; it reads MNITSKIGAIAAAGAVGLGLTA. A lipid anchor (N-palmitoyl cysteine) is attached at cysteine 23. A lipid anchor (S-diacylglycerol cysteine) is attached at cysteine 23. 6 residues coordinate xylitol: tyrosine 42, asparagine 121, arginine 173, asparagine 224, aspartate 249, and glutamine 269.

This sequence belongs to the bacterial solute-binding protein 2 family.

Its subcellular location is the cell membrane. Functionally, part of an ABC transporter complex likely involved in xylitol import. Binds xylitol. This is Xylitol-binding protein from Mycolicibacterium smegmatis (strain ATCC 700084 / mc(2)155) (Mycobacterium smegmatis).